The following is a 413-amino-acid chain: Tyrosine--tRNA ligase (413 aa).

The 'HIGH' region motif lies at 55-64 (PTRPDLHLGH). Residues 242–246 (KMSKS) carry the 'KMSKS' region motif. Lys245 contributes to the ATP binding site. In terms of domain architecture, S4 RNA-binding spans 346-410 (VKLSYILREC…GKKAFRRLVK (65 aa)).

This sequence belongs to the class-I aminoacyl-tRNA synthetase family. TyrS type 2 subfamily. As to quaternary structure, homodimer.

Its subcellular location is the cytoplasm. The enzyme catalyses tRNA(Tyr) + L-tyrosine + ATP = L-tyrosyl-tRNA(Tyr) + AMP + diphosphate + H(+). Its function is as follows. Catalyzes the attachment of tyrosine to tRNA(Tyr) in a two-step reaction: tyrosine is first activated by ATP to form Tyr-AMP and then transferred to the acceptor end of tRNA(Tyr). This is Tyrosine--tRNA ligase from Synechococcus sp. (strain JA-2-3B'a(2-13)) (Cyanobacteria bacterium Yellowstone B-Prime).